The following is a 122-amino-acid chain: Large ribosomal subunit protein eL18 (122 aa).

It belongs to the eukaryotic ribosomal protein eL18 family.

The chain is Large ribosomal subunit protein eL18 from Pyrobaculum aerophilum (strain ATCC 51768 / DSM 7523 / JCM 9630 / CIP 104966 / NBRC 100827 / IM2).